Here is a 578-residue protein sequence, read N- to C-terminus: MDNLALCEANNVPLTPITFLKRASECYPNRTSIIYGKTRFTWPQTYDRCCRLAASLISLNIGKNDVVSVVAPNTPAMYEMHFAVPMAGAVLNPINTRLDATSIAAILRHAKPKILFIYRSFEPLAREILQLLSSEDSNLNLPVIFIHEIDFPKRVSSEESDYECLIQRGEPTPLLLARMFCIQDEHDPISLNYTSGTTADPKGVVISHRGAYLSTLSAIIGWEMGTCPVYLWTLPMFHCNGWTFTWGTAARGGTSVCMRHVTAPEIYKNIEMHNVTHMCCVPTVFNILLKGNSLDLSHRSGPVHVLTGGSPPPAALVKKVQRLGFQVMHAYGLTEATGPVLFCEWQDEWNRLPENQQMELKARQGLSILGLTEVDVRNKETQESVPRDGKTMGEIVMKGSSIMKGYLKNPKATYEAFKHGWLNSGDVGVIHPDGHVEIKDRSKDIIISGGENISSVEVENIIYKYPKVLETAVVAMPHPTWGETPCAFVVLEKGETNNEDREDKLVTKERDLIEYCRENLPHFMCPRKVVFLDELPKNGNGKILKPKLRDIAKGLVAEDEVNVRSKVQRPVEHFTSRL.

Positions 576–578 (SRL) match the Microbody targeting signal motif.

This sequence belongs to the ATP-dependent AMP-binding enzyme family. Expressed at low levels in leaves.

It is found in the peroxisome. Functionally, may act as an acid--thiol ligase that activates carboxylic acids by forming acyl-CoAs. In Arabidopsis thaliana (Mouse-ear cress), this protein is Probable acyl-activating enzyme 12, peroxisomal (AAE12).